Consider the following 114-residue polypeptide: U10-agatoxin-Ao1a (114 aa).

Residues Met-1–Ala-15 form the signal peptide. Residues Lys-16–Arg-32 constitute a propeptide that is removed on maturation. 5 disulfide bridges follow: Cys-34–Cys-53, Cys-41–Cys-59, Cys-50–Cys-86, Cys-52–Cys-76, and Cys-61–Cys-74. Residues Gly-95 to Lys-114 are disordered.

This sequence belongs to the neurotoxin 04 (omega-agtx) family. 03 (type II/III omega-agtx) subfamily. As to expression, expressed by the venom gland.

The protein resides in the secreted. Its function is as follows. Inhibits voltage-gated calcium channels (Cav). This Agelena orientalis (Funnel-web spider) protein is U10-agatoxin-Ao1a.